Reading from the N-terminus, the 244-residue chain is INO80 complex subunit E (244 aa).

A coiled-coil region spans residues 10-54; that stretch reads DYKKKYRNLKRKLKFLIYEHECFQEELRKAQRKLLKVSRDKSFLL. 2 disordered regions span residues 59–187 and 222–244; these read QYEN…PLTF and FSDAGSGDDALDGDDDLVIDIPE. Low complexity-rich tracts occupy residues 99 to 115 and 122 to 136; these read PPLGGAPSPSSLSLPPS and ASRAPSPYLSSLASP. Basic residues predominate over residues 157–171; it reads RPKREKRPRLPRKLK. Residues K159 and K171 each participate in a glycyl lysine isopeptide (Lys-Gly) (interchain with G-Cter in SUMO2) cross-link. Residues 230-244 show a composition bias toward acidic residues; that stretch reads DALDGDDDLVIDIPE.

In terms of assembly, component of the chromatin remodeling INO80 complex; specifically part of a complex module associated with the N-terminus of INO80.

The protein resides in the nucleus. Its function is as follows. Putative regulatory component of the chromatin remodeling INO80 complex which is involved in transcriptional regulation, DNA replication and probably DNA repair. The sequence is that of INO80 complex subunit E (INO80E) from Bos taurus (Bovine).